Here is a 259-residue protein sequence, read N- to C-terminus: MQQMVPASGYDRAITIFSPEGRLYQVEYAREAVRRGTTAVGIKCKDGVVLAVDRRITSKLIDVSSIEKIFQIDDHIVAATSGLVADARVLIDRARLEAQMNRISYGEAITVEALAKKICDIKQAYTQHGGARPFGLALLITGIDRHSARLFETDPSGALIEYKATAIGSGRPIAMEVLESKYSEDMTVNEGMELALYALSKTTEELKPENIDMAIVKDSGKLVEKISVDEIEKIVKAVYKKVEAEEAEAEKNKGEEDIE.

This sequence belongs to the peptidase T1A family. In terms of assembly, the 20S proteasome core is composed of 14 alpha and 14 beta subunits that assemble into four stacked heptameric rings, resulting in a barrel-shaped structure. The two inner rings, each composed of seven catalytic beta subunits, are sandwiched by two outer rings, each composed of seven alpha subunits. The catalytic chamber with the active sites is on the inside of the barrel. Has a gated structure, the ends of the cylinder being occluded by the N-termini of the alpha-subunits. Is capped at one or both ends by the proteasome regulatory ATPase, PAN.

It localises to the cytoplasm. Its activity is regulated as follows. The formation of the proteasomal ATPase PAN-20S proteasome complex, via the docking of the C-termini of PAN into the intersubunit pockets in the alpha-rings, triggers opening of the gate for substrate entry. Interconversion between the open-gate and close-gate conformations leads to a dynamic regulation of the 20S proteasome proteolysis activity. In terms of biological role, component of the proteasome core, a large protease complex with broad specificity involved in protein degradation. In Methanococcus maripaludis (strain C5 / ATCC BAA-1333), this protein is Proteasome subunit alpha.